Reading from the N-terminus, the 244-residue chain is Nonsense-mediated decay protein 4 (244 aa).

Its subcellular location is the cytoplasm. In terms of biological role, involved in nonsense-mediated decay of mRNAs containing premature stop codons. The sequence is that of Nonsense-mediated decay protein 4 (NMD4) from Kluyveromyces lactis (strain ATCC 8585 / CBS 2359 / DSM 70799 / NBRC 1267 / NRRL Y-1140 / WM37) (Yeast).